The sequence spans 174 residues: MEEYSWENFLNDKLLATNQVSAAGLASEEDGVVYECVATPDENNPDFDKWSLFYKEDYDIEIEDENGSKTTKTITEGQSILTMFNEGYASDGIWLGGTKYQFINMDKGLEYEGHSFDVATCAKSKGGMHIIKVGGGHILIVLYDEEKEQDRGNSKNAALAFSKELIESTDTGAA.

Positions 4–9 are pro-rich sequence-binding; that stretch reads YSWENF. The Plasmodium-specific profilin mini-domain signature appears at 47–53; it reads FDKWSLF. Actin-binding stretches follow at residues 99–111 and 151–155; these read KYQF…GLEY and RGNSK.

Belongs to the profilin family. In terms of assembly, binds actin.

Its subcellular location is the cytoplasm. The protein localises to the cytoskeleton. Functionally, essential for the invasive blood stages of the parasite. Binds to proline rich sequences in various regulatory formin-like proteins and also to membrane phospholipids. Binds to actin and affects the structure of the cytoskeleton. Weakly sequesters actin monomers. The chain is Profilin from Plasmodium berghei.